Consider the following 674-residue polypeptide: PTS system glucose-specific EIIBCA component (674 aa).

The PTS EIIB type-1 domain maps to 1-89 (MASKLTTTSQ…LKLDGMKHFA (89 aa)). Cys28 acts as the Phosphocysteine intermediate; for EIIB activity in catalysis. Residues 117-476 (EFLSDTFRPI…DAERDEAKAQ (360 aa)) form the PTS EIIC type-1 domain. 10 consecutive transmembrane segments (helical) span residues 126-146 (ILWA…ADTF), 162-182 (YVFL…MVGA), 193-213 (WIGA…LGSA), 225-245 (VLND…GLYW), 260-280 (MVFV…FLLG), 303-323 (FILS…GLHW), 344-364 (PMGA…LIAL), 376-396 (LGGM…YGVL), 409-429 (GCLV…AFVF), and 442-462 (LGYT…VLFF). The region spanning 542–646 (DPIFAAGKLG…PLITPVVVSN (105 aa)) is the PTS EIIA type-1 domain. His594 (tele-phosphohistidine intermediate; for EIIA activity) is an active-site residue.

The protein resides in the cell membrane. The enzyme catalyses N(pros)-phospho-L-histidyl-[protein] + D-glucose(out) = D-glucose 6-phosphate(in) + L-histidyl-[protein]. In terms of biological role, the phosphoenolpyruvate-dependent sugar phosphotransferase system (sugar PTS), a major carbohydrate active transport system, catalyzes the phosphorylation of incoming sugar substrates concomitantly with their translocation across the cell membrane. This system is involved in glucose transport. The protein is PTS system glucose-specific EIIBCA component (ptsG) of Corynebacterium glutamicum (Brevibacterium saccharolyticum).